The sequence spans 190 residues: Probable RNA-binding protein 18 (190 aa).

Residues 25–106 (HRLWIGNLDP…KKLVVRWAHA (82 aa)) enclose the RRM domain. The interval 166-190 (VYSYFKPPDKKRTTPYSRTAWKSRR) is disordered.

This is Probable RNA-binding protein 18 (RBM18) from Pongo abelii (Sumatran orangutan).